The primary structure comprises 310 residues: Putative S-adenosyl-L-methionine-dependent methyltransferase MUL_4762 (310 aa).

Residues Asp-132 and 161 to 162 each bind S-adenosyl-L-methionine; that span reads DL.

This sequence belongs to the UPF0677 family.

Exhibits S-adenosyl-L-methionine-dependent methyltransferase activity. In Mycobacterium ulcerans (strain Agy99), this protein is Putative S-adenosyl-L-methionine-dependent methyltransferase MUL_4762.